A 62-amino-acid chain; its full sequence is Photosystem II reaction center protein Z (62 aa).

A run of 2 helical transmembrane segments spans residues 8–28 and 41–61; these read AVFA…VVFA and FSGT…NSLI.

It belongs to the PsbZ family. PSII is composed of 1 copy each of membrane proteins PsbA, PsbB, PsbC, PsbD, PsbE, PsbF, PsbH, PsbI, PsbJ, PsbK, PsbL, PsbM, PsbT, PsbY, PsbZ, Psb30/Ycf12, at least 3 peripheral proteins of the oxygen-evolving complex and a large number of cofactors. It forms dimeric complexes.

The protein localises to the plastid. The protein resides in the chloroplast thylakoid membrane. May control the interaction of photosystem II (PSII) cores with the light-harvesting antenna, regulates electron flow through the 2 photosystem reaction centers. PSII is a light-driven water plastoquinone oxidoreductase, using light energy to abstract electrons from H(2)O, generating a proton gradient subsequently used for ATP formation. This chain is Photosystem II reaction center protein Z, found in Oenothera elata subsp. hookeri (Hooker's evening primrose).